We begin with the raw amino-acid sequence, 168 residues long: Disulfide bond formation protein B 1 (168 aa).

Topologically, residues 1–14 (MNELTSRLNRERRF) are cytoplasmic. Residues 15 to 31 (LVLLGVICLALIGGALY) form a helical membrane-spanning segment. Over 32–49 (MQVVLGEAPCPLCILQRY) the chain is Periplasmic. Residues Cys41 and Cys44 are joined by a disulfide bond. The helical transmembrane segment at 50–65 (ALLFIAIFAFIAAAMP) threads the bilayer. The Cytoplasmic portion of the chain corresponds to 66–72 (GRKSLTF). The helical transmembrane segment at 73 to 89 (FEVLVVLSAIGGIVAAG) threads the bilayer. The Periplasmic segment spans residues 90-144 (NHVYILANPMVSCGIDTLQPIVDDLPLAKLWPLAFQVDGFCSTPYPPILGLSLAQ). Cys102 and Cys130 are oxidised to a cystine. The helical transmembrane segment at 145-163 (WALVAFVLTTVLVPLGIYR) threads the bilayer. The Cytoplasmic segment spans residues 164 to 168 (NRRRG).

Belongs to the DsbB family.

The protein resides in the cell inner membrane. Required for disulfide bond formation in some periplasmic proteins. Acts by oxidizing the DsbA protein. In Pseudomonas entomophila (strain L48), this protein is Disulfide bond formation protein B 1.